The chain runs to 98 residues: NADH-ubiquinone oxidoreductase chain 4L (98 aa).

3 helical membrane-spanning segments follow: residues 1–21 (MPLIHINIMMAFIMSLVGLLM), 29–49 (ALLCLEGMMLSLFILTALLAL), and 61–81 (IILLVFAACEAAIGLALLVMI).

This sequence belongs to the complex I subunit 4L family. As to quaternary structure, core subunit of respiratory chain NADH dehydrogenase (Complex I) which is composed of 45 different subunits.

Its subcellular location is the mitochondrion inner membrane. It carries out the reaction a ubiquinone + NADH + 5 H(+)(in) = a ubiquinol + NAD(+) + 4 H(+)(out). In terms of biological role, core subunit of the mitochondrial membrane respiratory chain NADH dehydrogenase (Complex I) which catalyzes electron transfer from NADH through the respiratory chain, using ubiquinone as an electron acceptor. Part of the enzyme membrane arm which is embedded in the lipid bilayer and involved in proton translocation. The polypeptide is NADH-ubiquinone oxidoreductase chain 4L (MT-ND4L) (Kogia breviceps (Pygmy sperm whale)).